Reading from the N-terminus, the 435-residue chain is Dual specificity mitogen-activated protein kinase kinase jkk-1 (435 aa).

Basic and acidic residues predominate over residues 35–49 (RDRRSTSVDQKHKEC). Residues 35–90 (RDRRSTSVDQKHKECSSTSSSPQHQRPNNIGYLTSPMERKFTPLSMKPSPSRRDTE) form a disordered region. Positions 50–66 (SSTSSSPQHQRPNNIGY) are enriched in polar residues. One can recognise a Protein kinase domain in the interval 122 to 385 (IHIISLLGSG…YRQLMKHDFY (264 aa)). Residues 128–136 (LGSGSCGVV) and K149 each bind ATP. The Proton acceptor role is filled by D246.

Belongs to the protein kinase superfamily. STE Ser/Thr protein kinase family. MAP kinase kinase subfamily. Interacts with unc-16. The cofactor is Mg(2+). In terms of tissue distribution, expressed in most neurons, including nerve ring, head ganglions, dorsal and ventral nerve cords and tail ganglions.

It is found in the cytoplasm. The protein resides in the perikaryon. Its subcellular location is the cell projection. The protein localises to the axon. The catalysed reaction is L-seryl-[protein] + ATP = O-phospho-L-seryl-[protein] + ADP + H(+). It catalyses the reaction L-threonyl-[protein] + ATP = O-phospho-L-threonyl-[protein] + ADP + H(+). It carries out the reaction L-tyrosyl-[protein] + ATP = O-phospho-L-tyrosyl-[protein] + ADP + H(+). Functionally, dual specificity protein kinase which acts as an essential component of the JNK signal transduction pathway. May phosphorylate jnk-1. Plays a role in coordinating locomotion via D-type GABAergic motoneurons and in regulating synaptic vesicle transport downstream of adapter protein unc-16 and probably by activating jnk-1. Positively regulates lifespan. Upon environmental stress such as heat stress regulates daf-16 nuclear translocation probably by activating jnk-1. Regulates germline cell apoptosis in response to heavy metals such as Cu(2+) and to arsenite. This chain is Dual specificity mitogen-activated protein kinase kinase jkk-1, found in Caenorhabditis elegans.